The primary structure comprises 319 residues: Serine acetyltransferase, plasmid (319 aa).

Belongs to the transferase hexapeptide repeat family.

Its subcellular location is the cytoplasm. It catalyses the reaction L-serine + acetyl-CoA = O-acetyl-L-serine + CoA. It participates in amino-acid biosynthesis; L-cysteine biosynthesis; L-cysteine from L-serine: step 1/2. The chain is Serine acetyltransferase, plasmid (srpH) from Synechococcus elongatus (strain ATCC 33912 / PCC 7942 / FACHB-805) (Anacystis nidulans R2).